The primary structure comprises 206 residues: Pyrrolidone-carboxylate peptidase (206 aa).

Residues Glu-76, Cys-139, and His-163 contribute to the active site.

The protein belongs to the peptidase C15 family. Homotetramer.

The protein resides in the cytoplasm. It catalyses the reaction Release of an N-terminal pyroglutamyl group from a polypeptide, the second amino acid generally not being Pro.. Removes 5-oxoproline from various penultimate amino acid residues except L-proline. The polypeptide is Pyrrolidone-carboxylate peptidase (pcp) (Pyrococcus horikoshii (strain ATCC 700860 / DSM 12428 / JCM 9974 / NBRC 100139 / OT-3)).